Reading from the N-terminus, the 358-residue chain is Ganglioside-induced differentiation-associated protein 1 (358 aa).

The GST N-terminal domain maps to 24–105 (VHLILYHWTH…YLEQTFLDER (82 aa)). Glycyl lysine isopeptide (Lys-Gly) (interchain with G-Cter in ubiquitin) cross-links involve residues K50, K172, K173, K188, and K190. A GST C-terminal domain is found at 153–309 (PAYATTRIRS…LISAVLPTAF (157 aa)). K203 is subject to N6-acetyllysine; alternate. A Glycyl lysine isopeptide (Lys-Gly) (interchain with G-Cter in ubiquitin); alternate cross-link involves residue K203. Glycyl lysine isopeptide (Lys-Gly) (interchain with G-Cter in ubiquitin) cross-links involve residues K206, K207, and K214. A run of 2 helical transmembrane segments spans residues 292–312 (VLGH…FRVA) and 320–340 (LGST…FMLF). The tract at residues 320–358 (LGSTLVVGLLVGMGYFAFMLFRRRLGSMILALRPRPNYF) is required for mitochondrial localization.

It belongs to the GST superfamily. In terms of assembly, homodimer. In terms of processing, ubiquitinated by PRKN during mitophagy, leading to its degradation and enhancement of mitophagy. Deubiquitinated by USP30. In terms of tissue distribution, expressed in brain, spinal cord, muscles and intestinal villi. In the central nervous system expressed most prominently in the cortex, cerebellum, thalamus, olfactory bulb, and spinal cord. Expressed also in sciatic nerves and in dorsal root ganglia.

The protein localises to the mitochondrion outer membrane. Its subcellular location is the cytoplasm. Functionally, regulates the mitochondrial network by promoting mitochondrial fission. The polypeptide is Ganglioside-induced differentiation-associated protein 1 (Gdap1) (Mus musculus (Mouse)).